The chain runs to 540 residues: Eukaryotic translation initiation factor 3 subunit L (540 aa).

Residues 307-515 (TFSDILLYIQ…IHIADTKVSH (209 aa)) form the PCI domain.

Belongs to the eIF-3 subunit L family. In terms of assembly, component of the eukaryotic translation initiation factor 3 (eIF-3) complex. The eIF-3 complex interacts with pix.

The protein localises to the cytoplasm. Component of the eukaryotic translation initiation factor 3 (eIF-3) complex, which is involved in protein synthesis of a specialized repertoire of mRNAs and, together with other initiation factors, stimulates binding of mRNA and methionyl-tRNAi to the 40S ribosome. The eIF-3 complex specifically targets and initiates translation of a subset of mRNAs involved in cell proliferation. The protein is Eukaryotic translation initiation factor 3 subunit L of Drosophila grimshawi (Hawaiian fruit fly).